The following is a 591-amino-acid chain: MAARSELLRPAFGEASPSLGRFVINPHSCSYRWWHMFLIMLVLYSAWASPFELSMEKAASIALVVTDLVVDVFFAIDIALSFFVAYRDTSTGLLITDRRKITMRYLKRPCFALDVASTIPLQIIYQLVTGKRQGLWGLLNLLRLWRLRRVSKLFARVEKDIRFNYLWTRLIKLLCVTLFALHFAACIYLWMAFNYKIKELTWIGSQIHSFEDRSVWFCYTCAVYWSITTLATVGYGDLHATNIGEMLFSIAFMLFNMGLTSYIIGNITNLVVRETSNTFKMRDMVQRVSEFGRMNRLPEAMREQMLASVQLRFRTDEQLQQEMLSELPKAVRSGVMKHMFKSAIESCYLFQGVSDSLIVQLVAEMKAEFFPPKANVILENETSTDCYIIISGEVEALTTLADGTEKHVKRIGPRGMAGEIGVMFSIPQPFTIRSRRLTQVVRISHIHLLQAVRPNTADGYIVFSNFIQYLESLKVQTKDVAFVSDHLWNGNSMVLRRATEVAVDESKEAAHKMLPCKEPKRVVIHEQLPNATSTALHPSPGKLVLLPDSMQELMKLSEKKFGKAVRGILTVEGAEVEDIEVIRDGDHLLFS.

The Cytoplasmic portion of the chain corresponds to 1-32 (MAARSELLRPAFGEASPSLGRFVINPHSCSYR). The chain crosses the membrane as a helical span at residues 33–53 (WWHMFLIMLVLYSAWASPFEL). Topologically, residues 54-63 (SMEKAASIAL) are extracellular. Residues 64–84 (VVTDLVVDVFFAIDIALSFFV) form a helical membrane-spanning segment. Residues 85-109 (AYRDTSTGLLITDRRKITMRYLKRP) lie on the Cytoplasmic side of the membrane. A helical transmembrane segment spans residues 110 to 130 (CFALDVASTIPLQIIYQLVTG). Topologically, residues 131–137 (KRQGLWG) are extracellular. Residues 138–158 (LLNLLRLWRLRRVSKLFARVE) form a helical; Voltage-sensor membrane-spanning segment. At 159–172 (KDIRFNYLWTRLIK) the chain is on the cytoplasmic side. Residues 173-193 (LLCVTLFALHFAACIYLWMAF) form a helical membrane-spanning segment. Residues 194–220 (NYKIKELTWIGSQIHSFEDRSVWFCYT) are Extracellular-facing. The pore-forming intramembrane region spans 221-240 (CAVYWSITTLATVGYGDLHA). The Extracellular segment spans residues 241–246 (TNIGEM). The helical transmembrane segment at 247-267 (LFSIAFMLFNMGLTSYIIGNI) threads the bilayer. The Cytoplasmic portion of the chain corresponds to 268 to 591 (TNLVVRETSN…IRDGDHLLFS (324 aa)). 349 to 469 (LFQGVSDSLI…YIVFSNFIQY (121 aa)) serves as a coordination point for a nucleoside 3',5'-cyclic phosphate. A KHA domain is found at 521–591 (RVVIHEQLPN…IRDGDHLLFS (71 aa)).

This sequence belongs to the potassium channel family. Plant (TC 1.A.1.4) subfamily.

It localises to the membrane. Its function is as follows. Probable inward-rectifying potassium channel. Assuming opened or closed conformations in response to the voltage difference across the membrane, the channel is activated by hyperpolarization. This chain is Potassium channel KAT4, found in Oryza sativa subsp. japonica (Rice).